A 626-amino-acid chain; its full sequence is Zinc finger protein 471 (626 aa).

In terms of domain architecture, KRAB spans 14–85; it reads VTFKDVAIDF…TSEMTRSPFS (72 aa). 15 consecutive C2H2-type zinc fingers follow at residues 206–228, 234–256, 262–284, 290–312, 318–340, 346–369, 375–397, 403–425, 431–453, 459–481, 487–509, 515–537, 543–565, 571–593, and 599–621; these read FKCNECDKTFTHSSSLTVHFRIH, YACEECGKAFKQRQHLAQHHRTH, FECKECRKAFKQSEHLIQHQRIH, YKCKECRKAFRQPAHLAQHQRIH, YECKECGKAFSDGSSFARHQRCH, YECIECGKAFRYNTSFIRHWRSYH, FNCIDCGKAFSVHIGLILHRRIH, YKCGVCGKTFSSGSSRTVHQRIH, YECDICGKDFSHHASLTQHQRVH, YECKECGKAFRQNVHLVSHLRIH, YECKECGKAFRISSQLATHQRIH, YECIECGNAFKQRSHLAQHQKTH, YECNECGKAFSQTSNLTQHQRIH, YKCTECGKAFSDSSSCAQHQRLH, and YQCFECGKAFRRKLSLICHQRSH.

Belongs to the krueppel C2H2-type zinc-finger protein family.

It is found in the nucleus. In terms of biological role, may be involved in transcriptional regulation. The protein is Zinc finger protein 471 (ZNF471) of Homo sapiens (Human).